The primary structure comprises 97 residues: Probable gamma-secretase subunit PEN-2 (97 aa).

Topologically, residues 1–20 (MLIPEDDKLDDEKMINIAKK) are cytoplasmic. An intramembrane region (helical) is located at residues 21–39 (LWFIGFFFLPWVWLINILY). At 40–55 (FIPYRNSLNDKVKWYL) the chain is on the cytoplasmic side. The chain crosses the membrane as a helical span at residues 56 to 76 (KFSLIGFLGYSTIFMGWMGIY). The Lumenal segment spans residues 77-97 (LVNRNKWGAFGDDISITIPFG).

The protein belongs to the PEN-2 family. In terms of assembly, the functional gamma-secretase complex is composed of at least four polypeptides: a presenilin homodimer, nicastrin, aph1 and psenen.

The protein resides in the endoplasmic reticulum membrane. It localises to the golgi apparatus. It is found in the golgi stack membrane. Its subcellular location is the cell membrane. The protein localises to the membrane. Its function is as follows. Essential subunit of the gamma-secretase complex, an endoprotease complex that catalyzes the intramembrane cleavage of integral membrane proteins such as Notch receptors. The gamma-secretase complex plays a role in Notch and Wnt signaling cascades and regulation of downstream processes via its role in processing key regulatory proteins. This Dictyostelium discoideum (Social amoeba) protein is Probable gamma-secretase subunit PEN-2 (psenen).